The following is a 149-amino-acid chain: D-aminoacyl-tRNA deacylase (149 aa).

A Gly-cisPro motif, important for rejection of L-amino acids motif is present at residues 141–142 (GP).

Belongs to the DTD family. As to quaternary structure, homodimer.

The protein resides in the cytoplasm. It carries out the reaction glycyl-tRNA(Ala) + H2O = tRNA(Ala) + glycine + H(+). The enzyme catalyses a D-aminoacyl-tRNA + H2O = a tRNA + a D-alpha-amino acid + H(+). Its function is as follows. An aminoacyl-tRNA editing enzyme that deacylates mischarged D-aminoacyl-tRNAs. Also deacylates mischarged glycyl-tRNA(Ala), protecting cells against glycine mischarging by AlaRS. Acts via tRNA-based rather than protein-based catalysis; rejects L-amino acids rather than detecting D-amino acids in the active site. By recycling D-aminoacyl-tRNA to D-amino acids and free tRNA molecules, this enzyme counteracts the toxicity associated with the formation of D-aminoacyl-tRNA entities in vivo and helps enforce protein L-homochirality. The protein is D-aminoacyl-tRNA deacylase of Streptomyces griseus subsp. griseus (strain JCM 4626 / CBS 651.72 / NBRC 13350 / KCC S-0626 / ISP 5235).